The primary structure comprises 165 residues: Protein SprT (165 aa).

Positions 22 to 163 (LAQANLKLDR…RCVHCGEPLV (142 aa)) constitute a SprT-like domain. Residue His-78 coordinates Zn(2+). Glu-79 is an active-site residue. Residue His-82 participates in Zn(2+) binding.

It belongs to the SprT family. It depends on Zn(2+) as a cofactor.

Its subcellular location is the cytoplasm. The polypeptide is Protein SprT (Salmonella paratyphi A (strain ATCC 9150 / SARB42)).